A 1433-amino-acid chain; its full sequence is DNA-directed RNA polymerase subunit beta' (1433 aa).

Zn(2+) contacts are provided by cysteine 60, cysteine 62, cysteine 75, and cysteine 78. Mg(2+) is bound by residues aspartate 449, aspartate 451, and aspartate 453. Zn(2+) is bound by residues cysteine 777, cysteine 851, cysteine 858, and cysteine 861. 2 stretches are compositionally biased toward acidic residues: residues 1383–1393 (DSEEEEEELSE) and 1411–1433 (EEDE…DDDD). The tract at residues 1383–1433 (DSEEEEEELSELSEAAPVSTATLSKLVAEEDEDEDELEEEADDSDDEDDDD) is disordered.

This sequence belongs to the RNA polymerase beta' chain family. In terms of assembly, the RNAP catalytic core consists of 2 alpha, 1 beta, 1 beta' and 1 omega subunit. When a sigma factor is associated with the core the holoenzyme is formed, which can initiate transcription. It depends on Mg(2+) as a cofactor. Zn(2+) serves as cofactor.

It catalyses the reaction RNA(n) + a ribonucleoside 5'-triphosphate = RNA(n+1) + diphosphate. Its function is as follows. DNA-dependent RNA polymerase catalyzes the transcription of DNA into RNA using the four ribonucleoside triphosphates as substrates. In Leptospira biflexa serovar Patoc (strain Patoc 1 / Ames), this protein is DNA-directed RNA polymerase subunit beta'.